The sequence spans 619 residues: Phosphoenolpyruvate carboxykinase [GTP] (619 aa).

Substrate is bound by residues R81 and 230–232 (YGG). Mn(2+) contacts are provided by K239 and H259. Residue S281 participates in substrate binding. 282–287 (ACGKTN) contacts GTP. C283 is an active-site residue. Residue D306 participates in Mn(2+) binding. 399 to 401 (NSR) contacts substrate. Residues R401, R432, and 525–528 (YGQN) contribute to the GTP site.

It belongs to the phosphoenolpyruvate carboxykinase [GTP] family. As to quaternary structure, monomer. Requires Mn(2+) as cofactor.

It catalyses the reaction oxaloacetate + GTP = phosphoenolpyruvate + GDP + CO2. In terms of biological role, in parasitic nematodes PEPCK carboxylates phosphoenolpyruvate to oxaloacetate thus introducing the products of glycolysis to mitochondrial metabolism. Its function is as follows. Catalyzes the conversion of oxaloacetate (OAA) to phosphoenolpyruvate (PEP), the rate-limiting step in the metabolic pathway that produces glucose from lactate and other precursors derived from the citric acid cycle. The sequence is that of Phosphoenolpyruvate carboxykinase [GTP] (PEPCK) from Haemonchus contortus (Barber pole worm).